Reading from the N-terminus, the 139-residue chain is MSYCRQEGKDRIIFVTKEDHETPSSAELVADDPNDPYEEHGLILPNGDINWNCPCLGGMASGPCGEQFKSAFSCFHYSTEDIKGSDCIDQFRAMQECMQKYPDLYPQDEEEEEEAKPVEPVEETADTKASAAKEQGASS.

Disulfide bonds link cysteine 53–cysteine 55, cysteine 64–cysteine 97, and cysteine 74–cysteine 87. One can recognise a CHCH domain in the interval 61 to 105 (SGPCGEQFKSAFSCFHYSTEDIKGSDCIDQFRAMQECMQKYPDLY). Short sequence motifs (cx9C motif) lie at residues 64–74 (CGEQFKSAFSC) and 87–97 (CIDQFRAMQEC). Residues 104–139 (LYPQDEEEEEEAKPVEPVEETADTKASAAKEQGASS) form a disordered region. Residues 106–124 (PQDEEEEEEAKPVEPVEET) show a composition bias toward acidic residues.

Monomer. Can form homooligomers. Interacts with GFER and forms transient disulfide bonds with GFER. Interacts with MICU1. Interacts with COX19 forming transient intermolecular disulfide bridges. Interacts with COA7 through transient intermolecular disulfide bonds. Interacts with AIFM1; the interaction increases in presence of NADH. Interacts with NDUFB10. Forms intrachain disulfide bridges, but exists in different redox states.

Its subcellular location is the mitochondrion intermembrane space. Central component of a redox-sensitive mitochondrial intermembrane space import machinery which is required for the biogenesis of respiratory chain complexes. Functions as a chaperone and catalyzes the formation of disulfide bonds in substrate proteins, such as COX17, COX19, MICU1 and COA7. Required for the import and folding of small cysteine-containing proteins (small Tim) in the mitochondrial intermembrane space (IMS). Required for the import of COA7 in the IMS. Precursor proteins to be imported into the IMS are translocated in their reduced form into the mitochondria. The oxidized form of CHCHD4/MIA40 forms a transient intermolecular disulfide bridge with the reduced precursor protein, resulting in oxidation of the precursor protein that now contains an intramolecular disulfide bond and is able to undergo folding in the IMS. Reduced CHCHD4/MIA40 is then reoxidized by GFER/ERV1 via a disulfide relay system. Mediates formation of disulfide bond in MICU1 in the IMS, promoting formation of the MICU1-MICU2 heterodimer that regulates mitochondrial calcium uptake. The protein is Mitochondrial intermembrane space import and assembly protein 40 (Chchd4) of Rattus norvegicus (Rat).